The primary structure comprises 296 residues: Elongation factor Ts (296 aa).

The segment at 82 to 85 (TDFV) is involved in Mg(2+) ion dislocation from EF-Tu.

Belongs to the EF-Ts family.

It localises to the cytoplasm. Associates with the EF-Tu.GDP complex and induces the exchange of GDP to GTP. It remains bound to the aminoacyl-tRNA.EF-Tu.GTP complex up to the GTP hydrolysis stage on the ribosome. The sequence is that of Elongation factor Ts from Coxiella burnetii (strain CbuK_Q154) (Coxiella burnetii (strain Q154)).